The primary structure comprises 167 residues: EF-hand calcium-binding domain-containing protein 11 (167 aa).

3 consecutive EF-hand domains span residues 17 to 52 (AERKKIELVFHQCDVDKKGYMSREDLKIAVVMLFGY), 91 to 126 (DPYEKARQIFSAFDVHCRGFLKLDDFKSAFKRVAPR), and 127 to 162 (LQERTVLEAFRHADQDSDGHISFKDFENIISYGLAN). Positions 140, 142, 144, 146, and 151 each coordinate Ca(2+).

This Danio rerio (Zebrafish) protein is EF-hand calcium-binding domain-containing protein 11 (efcab11).